Reading from the N-terminus, the 233-residue chain is Adapter protein MecA (233 aa).

Belongs to the MecA family. Homodimer.

Functionally, enables the recognition and targeting of unfolded and aggregated proteins to the ClpC protease or to other proteins involved in proteolysis. This chain is Adapter protein MecA, found in Lactococcus lactis subsp. lactis (strain IL1403) (Streptococcus lactis).